Reading from the N-terminus, the 234-residue chain is Small ribosomal subunit protein uS3 (234 aa).

A KH type-2 domain is found at Val-39 to Arg-107. Residues Glu-212–Ser-234 form a disordered region.

This sequence belongs to the universal ribosomal protein uS3 family. In terms of assembly, part of the 30S ribosomal subunit. Forms a tight complex with proteins S10 and S14.

Its function is as follows. Binds the lower part of the 30S subunit head. Binds mRNA in the 70S ribosome, positioning it for translation. In Thiobacillus denitrificans (strain ATCC 25259 / T1), this protein is Small ribosomal subunit protein uS3.